Reading from the N-terminus, the 119-residue chain is Large ribosomal subunit protein bL17 (119 aa).

The protein belongs to the bacterial ribosomal protein bL17 family. Part of the 50S ribosomal subunit. Contacts protein L32.

In Mycoplasma mycoides subsp. mycoides SC (strain CCUG 32753 / NCTC 10114 / PG1), this protein is Large ribosomal subunit protein bL17.